Consider the following 134-residue polypeptide: Histone H2A (134 aa).

Residues 1-10 (MTGGKSGGKA) show a composition bias toward gly residues. The tract at residues 1-26 (MTGGKSGGKASGSKSSAQSRSSKAGL) is disordered. N6-acetyllysine is present on residues Lys-5 and Lys-9. Residues 11 to 25 (SGSKSSAQSRSSKAG) are compositionally biased toward low complexity. At Gln-107 the chain carries N5-methylglutamine. Ser-131 carries the post-translational modification Phosphoserine. The short motif at 131 to 132 (SQ) is the [ST]-Q motif element.

The protein belongs to the histone H2A family. The nucleosome is a histone octamer containing two molecules each of H2A, H2B, H3 and H4 assembled in one H3-H4 heterotetramer and two H2A-H2B heterodimers. The octamer wraps approximately 147 bp of DNA. In terms of processing, phosphorylated to form H2AS128ph (gamma-H2A) in response to DNA double-strand breaks (DSBs) generated by exogenous genotoxic agents and by stalled replication forks. Phosphorylation is dependent on the DNA damage checkpoint kinases MEC1/ATR and TEL1/ATM, spreads on either side of a detected DSB site and may mark the surrounding chromatin for recruitment of proteins required for DNA damage signaling and repair. Gamma-H2A is removed from the DNA prior to the strand invasion-primer extension step of the repair process and subsequently dephosphorylated. Dephosphorylation is necessary for efficient recovery from the DNA damage checkpoint. Acetylated by ESA1 to form H2AK4ac and H2AK7ac.

The protein resides in the nucleus. It is found in the chromosome. In terms of biological role, core component of nucleosome which plays a central role in DNA double strand break (DSB) repair. Nucleosomes wrap and compact DNA into chromatin, limiting DNA accessibility to the cellular machineries which require DNA as a template. Histones thereby play a central role in transcription regulation, DNA repair, DNA replication and chromosomal stability. DNA accessibility is regulated via a complex set of post-translational modifications of histones, also called histone code, and nucleosome remodeling. The chain is Histone H2A (HTA1) from Phaeosphaeria nodorum (strain SN15 / ATCC MYA-4574 / FGSC 10173) (Glume blotch fungus).